The primary structure comprises 555 residues: CTP synthase (555 aa).

Residues 1–267 (MAKFVFVTGG…CKEVLDCLDL (267 aa)) are amidoligase domain. Ser-13 is a CTP binding site. Ser-13 contacts UTP. Residues 14–19 (SIGKGI) and Asp-71 contribute to the ATP site. The Mg(2+) site is built by Asp-71 and Glu-141. CTP is bound by residues 148 to 150 (DIE), 188 to 193 (KTKPTQ), and Lys-224. Residues 188–193 (KTKPTQ) and Lys-224 each bind UTP. The region spanning 292-534 (KVALVGKYVQ…IQAAQIRVPS (243 aa)) is the Glutamine amidotransferase type-1 domain. Gly-354 serves as a coordination point for L-glutamine. Residue Cys-381 is the Nucleophile; for glutamine hydrolysis of the active site. L-glutamine is bound by residues 382 to 385 (LGMQ), Glu-405, and Arg-462. Active-site residues include His-507 and Glu-509. The segment at 536 to 555 (PSEAFNPQSKIIEKKSLEQQ) is disordered. The span at 546–555 (IIEKKSLEQQ) shows a compositional bias: basic and acidic residues.

It belongs to the CTP synthase family. Homotetramer.

The enzyme catalyses UTP + L-glutamine + ATP + H2O = CTP + L-glutamate + ADP + phosphate + 2 H(+). It catalyses the reaction L-glutamine + H2O = L-glutamate + NH4(+). It carries out the reaction UTP + NH4(+) + ATP = CTP + ADP + phosphate + 2 H(+). Its pathway is pyrimidine metabolism; CTP biosynthesis via de novo pathway; CTP from UDP: step 2/2. Allosterically activated by GTP, when glutamine is the substrate; GTP has no effect on the reaction when ammonia is the substrate. The allosteric effector GTP functions by stabilizing the protein conformation that binds the tetrahedral intermediate(s) formed during glutamine hydrolysis. Inhibited by the product CTP, via allosteric rather than competitive inhibition. Its function is as follows. Catalyzes the ATP-dependent amination of UTP to CTP with either L-glutamine or ammonia as the source of nitrogen. Regulates intracellular CTP levels through interactions with the four ribonucleotide triphosphates. This chain is CTP synthase, found in Prochlorococcus marinus (strain NATL1A).